Consider the following 430-residue polypeptide: Glutamate-1-semialdehyde 2,1-aminomutase 2 (430 aa).

Position 269 is an N6-(pyridoxal phosphate)lysine (lysine 269).

This sequence belongs to the class-III pyridoxal-phosphate-dependent aminotransferase family. HemL subfamily. Homodimer. Pyridoxal 5'-phosphate serves as cofactor.

The protein localises to the cytoplasm. The catalysed reaction is (S)-4-amino-5-oxopentanoate = 5-aminolevulinate. Its pathway is porphyrin-containing compound metabolism; protoporphyrin-IX biosynthesis; 5-aminolevulinate from L-glutamyl-tRNA(Glu): step 2/2. This is Glutamate-1-semialdehyde 2,1-aminomutase 2 from Bacillus pumilus (strain SAFR-032).